A 295-amino-acid polypeptide reads, in one-letter code: Proline iminopeptidase (295 aa).

An AB hydrolase-1 domain is found at threonine 35–aspartate 279. The Nucleophile role is filled by serine 107. Aspartate 246 is an active-site residue. The active-site Proton donor is histidine 273.

This sequence belongs to the peptidase S33 family. In terms of assembly, part of the tricorn proteolytic complex.

It carries out the reaction Release of N-terminal proline from a peptide.. Functionally, cleaves H-Pro-AMC as well as a wide spectrum of amino acid substrates and several peptide substrates without a proline at the N-terminus. In conjunction with the three factors F1, F2 and F3, Tricorn degrades oligopeptides in a sequential manner, yielding free amino acids. This Thermoplasma volcanium (strain ATCC 51530 / DSM 4299 / JCM 9571 / NBRC 15438 / GSS1) protein is Proline iminopeptidase (pip).